Consider the following 237-residue polypeptide: Placenta-expressed transcript 1 protein (237 aa).

The N-terminal stretch at 1-27 (MLSLRSLLPHLGLFLCLALHLSPSLSA) is a signal peptide. Residues asparagine 30, asparagine 67, asparagine 103, and asparagine 136 are each glycosylated (N-linked (GlcNAc...) asparagine). Residues 145 to 162 (KMEQVQPSASTPIPESSE) are compositionally biased toward polar residues. The tract at residues 145 to 170 (KMEQVQPSASTPIPESSETSQTINTT) is disordered. Serine 218 carries the GPI-anchor amidated serine lipid modification. Residues 219–237 (PLAGALHILLVFLISKLLF) constitute a propeptide, removed in mature form.

In terms of processing, N-glycosylated. Post-translationally, GPI-anchored. As to expression, present in hair follicle cells and sebaceous gland of skin, ciliated epithelial cells of trachea and bronchial tube, striated portion of submandibular gland, distal convoluted tubule cells of kidney, ciliated epithelial cells of oviduct, medulla of adrenal gland and anterior lobe of pituitary gland. Expressed in keratinocytes of the hair follicle at the trichilemmal zone corresponding to the terminally differentiated outermost suprabasal outer root sheath (ORS), including that of the sebaceous gland duct (SGD) and the directly adjacent upper distal end of the companion layer (CL). Expression is similar in all hair follicle growth stages. Also detected during both the early and late anagen phases above the bulge of stem cells. Expressed at the leading edge of the epidermal wound. Not expressed in the interfollicular epidermis (IFE), inner root sheath (IRS) and hair fiber. Highly expressed in placenta. Detected in mammary and prostate epithelia and in the pancreas (at protein level).

It localises to the apical cell membrane. Its function is as follows. Modulates leading keratinocyte migration and cellular adhesion to matrix proteins during a wound-healing response and promotes wound repair. May play a role during trichilemmal differentiation of the hair follicle. The polypeptide is Placenta-expressed transcript 1 protein (Plet1) (Mus musculus (Mouse)).